Reading from the N-terminus, the 534-residue chain is MKYNTSTLGRRAAAAAGVLTLAVLGLAPMAQAENANHGDINTEALGSLTIHKHLNGDGNPIGAPDGTASNDDGKGAPVSGVQFTAYEINGIDLKTSEGWAKVNALTNTGAIPDNACANPGQPTLPNYTFRSSRVSGDTDRDGEAKIESLPVKAYLVCETKTPGNIVQKAKPFVVTIPHPNTAAKADGTWLYDVHVYPKNEKIEVAKTIEDQRNNGYIVGSKVRFPVSSTLPKLDDNSYYKYYQFKDTLDNRLKQVTATDVTLGGTRLDEGTDYTLGTDGQTVTVTFNQNGLSKLKGNPGQKLQAVFEGVVSEVGDGSINNTAQLISDTTYAEQPPAPETPPANPDNPPTTEQVTSKWGDLTIKKVDGNDRSGDKDGLKGAEFQIYKAKDAYADTCSPEADGQPLTINGESTFTTGEGGTINFKALFVSDSVQDTGRDNRVDAPHRCYVLVETKAPAGYVLPADASRAITVEPGAGVTQQVVIDNVKQSVPGLPLTGANGMLILTASGAALLMIAVGSVLVARYRERKRNRDLAA.

Residues 1 to 32 (MKYNTSTLGRRAAAAAGVLTLAVLGLAPMAQA) form the signal peptide. 2 disordered regions span residues 56–76 (GDGN…GKGA) and 329–376 (TYAE…DKDG). The segment covering 334-347 (PPAPETPPANPDNP) has biased composition (pro residues). Positions 361–376 (TIKKVDGNDRSGDKDG) are enriched in basic and acidic residues. The LPXTG sorting signal motif lies at 492-496 (LPLTG). Residue T495 is modified to Pentaglycyl murein peptidoglycan amidated threonine. A propeptide spans 496 to 534 (GANGMLILTASGAALLMIAVGSVLVARYRERKRNRDLAA) (removed by sortase).

Its subcellular location is the secreted. It localises to the cell wall. It is found in the fimbrium. Functionally, major fimbrial subunit of A.naeslundii. This is Fimbrial subunit type 2 from Actinomyces naeslundii.